A 485-amino-acid chain; its full sequence is Protein nucleotidyltransferase YdiU (485 aa).

Positions 90, 92, 93, 113, 125, 126, 176, and 183 each coordinate ATP. Asp252 (proton acceptor) is an active-site residue. Mg(2+)-binding residues include Asn253 and Asp262. Asp262 provides a ligand contact to ATP.

This sequence belongs to the SELO family. Requires Mg(2+) as cofactor. It depends on Mn(2+) as a cofactor.

The catalysed reaction is L-seryl-[protein] + ATP = 3-O-(5'-adenylyl)-L-seryl-[protein] + diphosphate. It catalyses the reaction L-threonyl-[protein] + ATP = 3-O-(5'-adenylyl)-L-threonyl-[protein] + diphosphate. The enzyme catalyses L-tyrosyl-[protein] + ATP = O-(5'-adenylyl)-L-tyrosyl-[protein] + diphosphate. It carries out the reaction L-histidyl-[protein] + UTP = N(tele)-(5'-uridylyl)-L-histidyl-[protein] + diphosphate. The catalysed reaction is L-seryl-[protein] + UTP = O-(5'-uridylyl)-L-seryl-[protein] + diphosphate. It catalyses the reaction L-tyrosyl-[protein] + UTP = O-(5'-uridylyl)-L-tyrosyl-[protein] + diphosphate. Functionally, nucleotidyltransferase involved in the post-translational modification of proteins. It can catalyze the addition of adenosine monophosphate (AMP) or uridine monophosphate (UMP) to a protein, resulting in modifications known as AMPylation and UMPylation. The polypeptide is Protein nucleotidyltransferase YdiU (Aliivibrio fischeri (strain ATCC 700601 / ES114) (Vibrio fischeri)).